We begin with the raw amino-acid sequence, 102 residues long: Urease subunit beta (102 aa).

It belongs to the urease beta subunit family. In terms of assembly, heterotrimer of UreA (gamma), UreB (beta) and UreC (alpha) subunits. Three heterotrimers associate to form the active enzyme.

The protein resides in the cytoplasm. It carries out the reaction urea + 2 H2O + H(+) = hydrogencarbonate + 2 NH4(+). It functions in the pathway nitrogen metabolism; urea degradation; CO(2) and NH(3) from urea (urease route): step 1/1. The sequence is that of Urease subunit beta from Acinetobacter baumannii (strain AB307-0294).